A 639-amino-acid polypeptide reads, in one-letter code: ATP-dependent RNA helicase DDX51 (639 aa).

Residues 1–131 (MALFHIARYA…QEDVQRPPAP (131 aa)) form a disordered region. A2 is subject to N-acetylalanine. The segment covering 24 to 48 (AGSRARVLLERLQNRARERQQREPE) has biased composition (basic and acidic residues). Positions 50-63 (ETTGTAGEGEAAAA) are enriched in low complexity. A compositionally biased stretch (basic residues) spans 64–76 (GKRRRRPRRRRRV). Position 79 is a phosphoserine (S79). Residues 94–105 (ADKDVDAGRGEE) show a composition bias toward basic and acidic residues. The Q motif signature appears at 193–201 (YFPVQAAVI). The Helicase ATP-binding domain maps to 215–424 (GRGGYQPSDL…RLGLYQPRLF (210 aa)). 228–235 (APTGSGKT) contacts ATP. The DEAD box motif lies at 343–346 (DEAD). S432 is modified (phosphoserine). The region spanning 467–615 (IVLHLVLRMS…EIPRKLLQPL (149 aa)) is the Helicase C-terminal domain.

Belongs to the DEAD box helicase family. DDX51/DBP6 subfamily.

It localises to the nucleus. The protein localises to the nucleolus. It carries out the reaction ATP + H2O = ADP + phosphate + H(+). In terms of biological role, ATP-binding RNA helicase involved in the biogenesis of 60S ribosomal subunits. This is ATP-dependent RNA helicase DDX51 (Ddx51) from Mus musculus (Mouse).